A 147-amino-acid chain; its full sequence is SsrA-binding protein (147 aa).

It belongs to the SmpB family.

It localises to the cytoplasm. Required for rescue of stalled ribosomes mediated by trans-translation. Binds to transfer-messenger RNA (tmRNA), required for stable association of tmRNA with ribosomes. tmRNA and SmpB together mimic tRNA shape, replacing the anticodon stem-loop with SmpB. tmRNA is encoded by the ssrA gene; the 2 termini fold to resemble tRNA(Ala) and it encodes a 'tag peptide', a short internal open reading frame. During trans-translation Ala-aminoacylated tmRNA acts like a tRNA, entering the A-site of stalled ribosomes, displacing the stalled mRNA. The ribosome then switches to translate the ORF on the tmRNA; the nascent peptide is terminated with the 'tag peptide' encoded by the tmRNA and targeted for degradation. The ribosome is freed to recommence translation, which seems to be the essential function of trans-translation. In Mycoplasmopsis agalactiae (strain NCTC 10123 / CIP 59.7 / PG2) (Mycoplasma agalactiae), this protein is SsrA-binding protein.